Here is a 442-residue protein sequence, read N- to C-terminus: MSDTIAAIATAHGVGSISIVRLSGERALEFALKLSHKTKLTPRHATFTKLFNQNNEIIDEAIMIYFKAPYSFTGEDIVEFQIHGGFSVSEVLLEELVSLGARLALAGEFSKRACLNGKMTPLKALNIQDLILSKSALAAKIIARNMQGNLGELLEKIRTDLVKTLAFVETSIDYADDDLPSDLLEQISTMCEENSKILKEIYTLSQSKKGLIEGFKIAIVGKPNVGKSSLLNALLSYERAIVSDIAGTTRDTIEESFKLGTHLLRIIDTAGIRESKDVIEQIGVALSKKSLEDADIILAVFDASRVQDKEDEKIFDLLANTDKKIFWILNKSDLENVFKNTQNKNFIKLSAQKDITLLKEELQNYLNSFDSEGIMVSSLDLINACKISSEAIFRAKGLLEESSLELFAFELNLAINELARFTKDFQRDEILDEMFGNFCLGK.

Residues arginine 21, glutamate 79, and lysine 118 each coordinate (6S)-5-formyl-5,6,7,8-tetrahydrofolate. In terms of domain architecture, TrmE-type G spans 214-367 (GFKIAIVGKP…LKEELQNYLN (154 aa)). Asparagine 224 is a binding site for K(+). Residues 224 to 229 (NVGKSS), 243 to 249 (SDIAGTT), and 268 to 271 (DTAG) contribute to the GTP site. Serine 228 is a Mg(2+) binding site. Residues serine 243, isoleucine 245, and threonine 248 each contribute to the K(+) site. Mg(2+) is bound at residue threonine 249. (6S)-5-formyl-5,6,7,8-tetrahydrofolate is bound at residue lysine 442.

Belongs to the TRAFAC class TrmE-Era-EngA-EngB-Septin-like GTPase superfamily. TrmE GTPase family. In terms of assembly, homodimer. Heterotetramer of two MnmE and two MnmG subunits. The cofactor is K(+).

Its subcellular location is the cytoplasm. Its function is as follows. Exhibits a very high intrinsic GTPase hydrolysis rate. Involved in the addition of a carboxymethylaminomethyl (cmnm) group at the wobble position (U34) of certain tRNAs, forming tRNA-cmnm(5)s(2)U34. This Campylobacter jejuni (strain RM1221) protein is tRNA modification GTPase MnmE.